Reading from the N-terminus, the 178-residue chain is Zinc finger CCHC domain-containing protein 10 (178 aa).

The CCHC-type zinc-finger motif lies at 21 to 38 (VRCQKCLEFGHWTYECKG). The interval 66–178 (QSIGETNIEK…EPQKKKKKKK (113 aa)) is disordered. Composition is skewed to low complexity over residues 85–113 (SVTSSSTSSSDSSASESSSESETSASSSS) and 121–164 (SLSS…SSES).

This is Zinc finger CCHC domain-containing protein 10 (Zcchc10) from Mus musculus (Mouse).